A 225-amino-acid polypeptide reads, in one-letter code: MKLFVGLGNPGARYAGNRHNIGYMAVEAIAADHGFGPWRARFQGLTSEGRLGSEQVLLLKPETFMNLSGQSVGEAMRFYKLTPADVIVFHDELDLAPGKLRLKQGGGHAGHNGLRSIHAHVGEAYGRVRLGIGHPGHKDAVAAYVLNDFAKADQDWLADLLRGISDGAEALARGDGAKFQNAVALRMQPPKPEKPKPAAKAPEAQAPEAAPDARSALQKLADRFR.

Position 14 (Y14) interacts with tRNA. H19 functions as the Proton acceptor in the catalytic mechanism. F64, N66, and N112 together coordinate tRNA. The tract at residues 184–225 (ALRMQPPKPEKPKPAAKAPEAQAPEAAPDARSALQKLADRFR) is disordered. Residues 198–210 (AAKAPEAQAPEAA) show a composition bias toward low complexity.

Belongs to the PTH family. In terms of assembly, monomer.

The protein localises to the cytoplasm. It carries out the reaction an N-acyl-L-alpha-aminoacyl-tRNA + H2O = an N-acyl-L-amino acid + a tRNA + H(+). In terms of biological role, hydrolyzes ribosome-free peptidyl-tRNAs (with 1 or more amino acids incorporated), which drop off the ribosome during protein synthesis, or as a result of ribosome stalling. Functionally, catalyzes the release of premature peptidyl moieties from peptidyl-tRNA molecules trapped in stalled 50S ribosomal subunits, and thus maintains levels of free tRNAs and 50S ribosomes. The chain is Peptidyl-tRNA hydrolase from Cereibacter sphaeroides (strain KD131 / KCTC 12085) (Rhodobacter sphaeroides).